The sequence spans 162 residues: Putative 4-hydroxy-4-methyl-2-oxoglutarate aldolase (162 aa).

Substrate-binding positions include 75–78 and R97; that span reads GDML. Residue D98 coordinates a divalent metal cation.

It belongs to the class II aldolase/RraA-like family. In terms of assembly, homotrimer. A divalent metal cation is required as a cofactor.

The catalysed reaction is 4-hydroxy-4-methyl-2-oxoglutarate = 2 pyruvate. It catalyses the reaction oxaloacetate + H(+) = pyruvate + CO2. In terms of biological role, catalyzes the aldol cleavage of 4-hydroxy-4-methyl-2-oxoglutarate (HMG) into 2 molecules of pyruvate. Also contains a secondary oxaloacetate (OAA) decarboxylase activity due to the common pyruvate enolate transition state formed following C-C bond cleavage in the retro-aldol and decarboxylation reactions. The protein is Putative 4-hydroxy-4-methyl-2-oxoglutarate aldolase of Pseudomonas syringae pv. tomato (strain ATCC BAA-871 / DC3000).